Consider the following 363-residue polypeptide: Histidinol-phosphate aminotransferase (363 aa).

Position 218 is an N6-(pyridoxal phosphate)lysine (Lys-218).

This sequence belongs to the class-II pyridoxal-phosphate-dependent aminotransferase family. Histidinol-phosphate aminotransferase subfamily. In terms of assembly, homodimer. Requires pyridoxal 5'-phosphate as cofactor.

The enzyme catalyses L-histidinol phosphate + 2-oxoglutarate = 3-(imidazol-4-yl)-2-oxopropyl phosphate + L-glutamate. Its pathway is amino-acid biosynthesis; L-histidine biosynthesis; L-histidine from 5-phospho-alpha-D-ribose 1-diphosphate: step 7/9. The polypeptide is Histidinol-phosphate aminotransferase (Xanthomonas axonopodis pv. citri (strain 306)).